We begin with the raw amino-acid sequence, 240 residues long: Probable septum site-determining protein MinC (240 aa).

The protein belongs to the MinC family. In terms of assembly, interacts with MinD and FtsZ.

In terms of biological role, cell division inhibitor that blocks the formation of polar Z ring septums. Rapidly oscillates between the poles of the cell to destabilize FtsZ filaments that have formed before they mature into polar Z rings. Prevents FtsZ polymerization. The polypeptide is Probable septum site-determining protein MinC (Acinetobacter baumannii (strain ATCC 17978 / DSM 105126 / CIP 53.77 / LMG 1025 / NCDC KC755 / 5377)).